The following is a 496-amino-acid chain: Probable G-protein coupled receptor K01A12.3 (496 aa).

Topologically, residues 1 to 19 are extracellular; it reads MESVTRHRADMISFFTFDS. Residues 20 to 40 traverse the membrane as a helical segment; sequence YISIVGVAYTAVGLLGVFCNV. Residues 41–58 are Cytoplasmic-facing; the sequence is TTVIMILTNRVFRLSAYT. A helical transmembrane segment spans residues 59 to 79; it reads IMANVALADSIVMLIAGVACG. Over 80–128 the chain is Extracellular; it reads MDVMWPNPNDLTSFIPSLEEPYQKIAPVSLRNDSKTDSSAAGFETGNIH. The N-linked (GlcNAc...) asparagine glycan is linked to Asn111. A helical transmembrane segment spans residues 129–149; the sequence is AVLSFSFVAAWTAGVISYAML. The Cytoplasmic portion of the chain corresponds to 150–169; that stretch reads GTNRCIAICYYGTKARALNQ. The helical transmembrane segment at 170–190 threads the bilayer; the sequence is VSVAVACSASTWIVGIAAALV. The Extracellular portion of the chain corresponds to 191–216; it reads GTLSQPMIGIQRTMWSISFLEPRPHT. A helical membrane pass occupies residues 217 to 237; the sequence is TLFFTLLCAANLLGLGAQWVC. Topologically, residues 238–285 are cytoplasmic; that stretch reads STLVLLKIRQVKKKISKNKLNQNSANRFRKQVILALNEIIVTGNFKAR. A helical membrane pass occupies residues 286 to 306; the sequence is LTFQFFYPSILCTISTFLFFI. Residues 307 to 318 lie on the Extracellular side of the membrane; it reads KPYAFEYLSGWQ. Residues 319-339 traverse the membrane as a helical segment; it reads LVILHLLWLCNHTCNPFIYAY. Residues 340-496 lie on the Cytoplasmic side of the membrane; the sequence is FNDRMRLTYK…WVKFAKKASI (157 aa). Positions 451 to 470 are disordered; that stretch reads TKELESAHNQGGSSRFDSER.

The protein belongs to the G-protein coupled receptor 1 family.

Its subcellular location is the cell membrane. This Caenorhabditis elegans protein is Probable G-protein coupled receptor K01A12.3.